Reading from the N-terminus, the 478-residue chain is Methylenetetrahydrofolate--tRNA-(uracil-5-)-methyltransferase TrmFO (478 aa).

16–21 provides a ligand contact to FAD; the sequence is GAGLAG. The segment at 429 to 448 is disordered; it reads PLANPPTKGPDGKRLRGPEK. Over residues 438 to 448 the composition is skewed to basic and acidic residues; the sequence is PDGKRLRGPEK.

This sequence belongs to the MnmG family. TrmFO subfamily. FAD is required as a cofactor.

The protein localises to the cytoplasm. It carries out the reaction uridine(54) in tRNA + (6R)-5,10-methylene-5,6,7,8-tetrahydrofolate + NADH + H(+) = 5-methyluridine(54) in tRNA + (6S)-5,6,7,8-tetrahydrofolate + NAD(+). The catalysed reaction is uridine(54) in tRNA + (6R)-5,10-methylene-5,6,7,8-tetrahydrofolate + NADPH + H(+) = 5-methyluridine(54) in tRNA + (6S)-5,6,7,8-tetrahydrofolate + NADP(+). Catalyzes the folate-dependent formation of 5-methyl-uridine at position 54 (M-5-U54) in all tRNAs. The polypeptide is Methylenetetrahydrofolate--tRNA-(uracil-5-)-methyltransferase TrmFO (Rhodopseudomonas palustris (strain ATCC BAA-98 / CGA009)).